The sequence spans 353 residues: Thiamine-phosphate synthase (353 aa).

The interval 1–128 is unknown; the sequence is MKSMPFAPIA…AASAAAIRYG (128 aa). Residues 129–353 are thiamine-phosphate synthase; that stretch reads LYDLEVTVLQ…TSLQLLEALR (225 aa). 4-amino-2-methyl-5-(diphosphooxymethyl)pyrimidine-binding positions include 185–189 and Asn217; that span reads QYRNK. Residues Asp218 and Asp237 each contribute to the Mg(2+) site. Ser256 serves as a coordination point for 4-amino-2-methyl-5-(diphosphooxymethyl)pyrimidine. Residue 282-284 participates in 2-[(2R,5Z)-2-carboxy-4-methylthiazol-5(2H)-ylidene]ethyl phosphate binding; sequence TAT. Lys285 contacts 4-amino-2-methyl-5-(diphosphooxymethyl)pyrimidine. 2-[(2R,5Z)-2-carboxy-4-methylthiazol-5(2H)-ylidene]ethyl phosphate is bound at residue Gly312.

This sequence belongs to the thiamine-phosphate synthase family. It depends on Mg(2+) as a cofactor.

It carries out the reaction 2-[(2R,5Z)-2-carboxy-4-methylthiazol-5(2H)-ylidene]ethyl phosphate + 4-amino-2-methyl-5-(diphosphooxymethyl)pyrimidine + 2 H(+) = thiamine phosphate + CO2 + diphosphate. The catalysed reaction is 2-(2-carboxy-4-methylthiazol-5-yl)ethyl phosphate + 4-amino-2-methyl-5-(diphosphooxymethyl)pyrimidine + 2 H(+) = thiamine phosphate + CO2 + diphosphate. The enzyme catalyses 4-methyl-5-(2-phosphooxyethyl)-thiazole + 4-amino-2-methyl-5-(diphosphooxymethyl)pyrimidine + H(+) = thiamine phosphate + diphosphate. It functions in the pathway cofactor biosynthesis; thiamine diphosphate biosynthesis; thiamine phosphate from 4-amino-2-methyl-5-diphosphomethylpyrimidine and 4-methyl-5-(2-phosphoethyl)-thiazole: step 1/1. In terms of biological role, condenses 4-methyl-5-(beta-hydroxyethyl)thiazole monophosphate (THZ-P) and 2-methyl-4-amino-5-hydroxymethyl pyrimidine pyrophosphate (HMP-PP) to form thiamine monophosphate (TMP). The protein is Thiamine-phosphate synthase of Prochlorococcus marinus (strain MIT 9313).